A 993-amino-acid polypeptide reads, in one-letter code: Protein translocase subunit SecA (993 aa).

ATP is bound by residues Gln102, 120 to 124, and Asp523; that span reads GEGKT. The disordered stretch occupies residues 910 to 962; the sequence is ENAPEPQISGGNGQQPPQRRQQTSLDDLEKQFERKKKRELEQARMAGGGMPDA. Positions 936 to 951 are enriched in basic and acidic residues; the sequence is DLEKQFERKKKRELEQ. Zn(2+) is bound by residues Cys979, Cys981, Cys990, and His991.

Belongs to the SecA family. In terms of assembly, monomer and homodimer. Part of the essential Sec protein translocation apparatus which comprises SecA, SecYEG and auxiliary proteins SecDF. Other proteins may also be involved. Zn(2+) is required as a cofactor.

It is found in the cell inner membrane. The protein resides in the cytoplasm. It catalyses the reaction ATP + H2O + cellular proteinSide 1 = ADP + phosphate + cellular proteinSide 2.. In terms of biological role, part of the Sec protein translocase complex. Interacts with the SecYEG preprotein conducting channel. Has a central role in coupling the hydrolysis of ATP to the transfer of proteins into and across the cell membrane, serving as an ATP-driven molecular motor driving the stepwise translocation of polypeptide chains across the membrane. The chain is Protein translocase subunit SecA from Koribacter versatilis (strain Ellin345).